Here is a 367-residue protein sequence, read N- to C-terminus: UDP-N-acetylglucosamine--N-acetylmuramyl-(pentapeptide) pyrophosphoryl-undecaprenol N-acetylglucosamine transferase (367 aa).

Residues 15 to 17 (TGG), N127, R163, S191, I249, and Q294 each bind UDP-N-acetyl-alpha-D-glucosamine.

The protein belongs to the glycosyltransferase 28 family. MurG subfamily.

It is found in the cell inner membrane. It catalyses the reaction di-trans,octa-cis-undecaprenyl diphospho-N-acetyl-alpha-D-muramoyl-L-alanyl-D-glutamyl-meso-2,6-diaminopimeloyl-D-alanyl-D-alanine + UDP-N-acetyl-alpha-D-glucosamine = di-trans,octa-cis-undecaprenyl diphospho-[N-acetyl-alpha-D-glucosaminyl-(1-&gt;4)]-N-acetyl-alpha-D-muramoyl-L-alanyl-D-glutamyl-meso-2,6-diaminopimeloyl-D-alanyl-D-alanine + UDP + H(+). It participates in cell wall biogenesis; peptidoglycan biosynthesis. Its function is as follows. Cell wall formation. Catalyzes the transfer of a GlcNAc subunit on undecaprenyl-pyrophosphoryl-MurNAc-pentapeptide (lipid intermediate I) to form undecaprenyl-pyrophosphoryl-MurNAc-(pentapeptide)GlcNAc (lipid intermediate II). The protein is UDP-N-acetylglucosamine--N-acetylmuramyl-(pentapeptide) pyrophosphoryl-undecaprenol N-acetylglucosamine transferase of Burkholderia pseudomallei (strain 1710b).